The primary structure comprises 51 residues: Large ribosomal subunit protein eL39 (51 aa).

The segment at 1–23 (MSALKKSFIKRKLAKKQKQNRPM) is disordered. Residues 7-19 (SFIKRKLAKKQKQ) show a composition bias toward basic residues.

It belongs to the eukaryotic ribosomal protein eL39 family. In terms of assembly, interacts with impact.

The chain is Large ribosomal subunit protein eL39 (rpl-39) from Caenorhabditis elegans.